Reading from the N-terminus, the 337-residue chain is Glyceraldehyde-3-phosphate dehydrogenase (337 aa).

NAD(+)-binding positions include 12 to 13 (RI), Asp34, and Lys79. D-glyceraldehyde 3-phosphate is bound by residues 150–152 (SCT), Thr181, 210–211 (TG), and Arg233. Cys151 acts as the Nucleophile in catalysis. Residue Asn315 coordinates NAD(+).

Belongs to the glyceraldehyde-3-phosphate dehydrogenase family. In terms of assembly, homotetramer.

It localises to the cytoplasm. The catalysed reaction is D-glyceraldehyde 3-phosphate + phosphate + NAD(+) = (2R)-3-phospho-glyceroyl phosphate + NADH + H(+). It participates in carbohydrate degradation; glycolysis; pyruvate from D-glyceraldehyde 3-phosphate: step 1/5. The protein is Glyceraldehyde-3-phosphate dehydrogenase (GPD1) of Cochliobolus heterostrophus (Southern corn leaf blight fungus).